The chain runs to 535 residues: Aklavinone 12-hydroxylase RdmE (535 aa).

Positions 15, 16, 35, 119, and 143 each coordinate FAD. Tyrosine 224 functions as the Proton acceptor in the catalytic mechanism. Aspartate 308 serves as a coordination point for FAD. An aklavinone-binding site is contributed by glycine 317.

This sequence belongs to the PheA/TfdB FAD monooxygenase family. In terms of assembly, monomer. FAD serves as cofactor.

It carries out the reaction aklavinone + NADPH + O2 + H(+) = epsilon-rhodomycinone + NADP(+) + H2O. It functions in the pathway antibiotic biosynthesis; daunorubicin biosynthesis. It participates in antibiotic biosynthesis; carminomycin biosynthesis. Its pathway is antibiotic biosynthesis; rhodomycin biosynthesis. With respect to regulation, inhibited by phenylglyoxal and 2,3-butanedione. NADP provides a partial protection against inhibition by phenylglyoxal. Increasing the methanol concentration in the assay causes inhibition of the enzyme. Involved in the biosynthesis of the anthracyclines carminomycin, rhodomycin and daunorubicin (daunomycin) which are aromatic polyketide antibiotics that exhibit high cytotoxicity and are widely applied in the chemotherapy of a variety of cancers. Catalyzes the incorporation of a hydroxyl group at position C-11 of aklavinone, resulting in epsilon-rhodomycinone. It cannot accept substrates glycosylated at position C-7 and is specific for the C-9R configuration of anthracyclines. It can use both NAD or NADP but it is slowly inactivated in the presence of NADH. This Streptomyces purpurascens protein is Aklavinone 12-hydroxylase RdmE (rdmE).